A 465-amino-acid chain; its full sequence is Zinc finger CCCH domain-containing protein 58 (465 aa).

Residues 1–26 (MERYGGAGEDESRSDPSHEWSAQGTE) form a disordered region. 3 C3H1-type zinc fingers span residues 51–79 (RPDEPDCIYYLRTGVCGYGSRCRFNHPRN), 97–125 (RMGQPVCQHFMRTGTCKFGASCKYHHPRQ), and 145–173 (RPGEKECSYFMRTGQCKFGSTCRYHHPVP). Disordered regions lie at residues 173 to 200 (PPGVQAPSQQQQQQLSAGPTMYPSLQSQ) and 274 to 302 (LSPSAPAYQSGPSSTGVSNKEQTFPQRPE). Residues 177–191 (QAPSQQQQQQLSAGP) show a composition bias toward low complexity. A compositionally biased stretch (polar residues) spans 283–298 (SGPSSTGVSNKEQTFP). 2 C3H1-type zinc fingers span residues 300–328 (RPEQPECQYFMRTGDCKFGTSCRFHHPME) and 345–373 (RPGAVPCTHFAQHGICKFGPACKFDHSLG). Over residues 397 to 431 (SLGTLAPSSSSDQCTELISSSSIEPITTTTGGSET) the composition is skewed to low complexity. Positions 397–465 (SLGTLAPSSS…SASNEAKTSS (69 aa)) are disordered. Residues 444–453 (SHPEPAETNK) show a composition bias toward basic and acidic residues. Residues 454–465 (GDSASNEAKTSS) show a composition bias toward polar residues.

It is found in the nucleus. This is Zinc finger CCCH domain-containing protein 58 from Arabidopsis thaliana (Mouse-ear cress).